Consider the following 109-residue polypeptide: MAITDILSAKDIESALSSCQAADSFNYKSFFSTVGLSSKTPDQIKKVFGILDQDKSGFIEEEELQLFLKNFSSSARVLTSAETKAFLAAGDTDGDGKIGVEEFQSLVKA.

An N-acetylalanine modification is found at Ala2. 2 consecutive EF-hand domains span residues 39–74 (KTPDQIKKVFGILDQDKSGFIEEEELQLFLKNFSSS) and 78–109 (LTSAETKAFLAAGDTDGDGKIGVEEFQSLVKA). Asp52, Asp54, Ser56, Glu63, Asp91, Asp93, Asp95, Lys97, and Glu102 together coordinate Ca(2+).

It belongs to the parvalbumin family.

Its function is as follows. Appears to promote immune maturation in bone marrow cells in culture. Binds two calcium ions. The polypeptide is Parvalbumin, thymic (Gallus gallus (Chicken)).